The chain runs to 238 residues: Orotidine 5'-phosphate decarboxylase (238 aa).

Residues aspartate 10, lysine 32, 59 to 68 (DLKLHDIPNT), threonine 122, arginine 184, glutamine 193, glycine 213, and arginine 214 each bind substrate. Lysine 61 (proton donor) is an active-site residue.

The protein belongs to the OMP decarboxylase family. Type 1 subfamily. Homodimer.

It carries out the reaction orotidine 5'-phosphate + H(+) = UMP + CO2. Its pathway is pyrimidine metabolism; UMP biosynthesis via de novo pathway; UMP from orotate: step 2/2. Functionally, catalyzes the decarboxylation of orotidine 5'-monophosphate (OMP) to uridine 5'-monophosphate (UMP). This chain is Orotidine 5'-phosphate decarboxylase, found in Bacillus cytotoxicus (strain DSM 22905 / CIP 110041 / 391-98 / NVH 391-98).